Reading from the N-terminus, the 409-residue chain is uncharacterized protein (409 aa).

A run of 10 helical transmembrane segments spans residues F62–I82, L100–F120, M123–L143, A152–I172, V183–V203, G252–F272, A293–V313, Y328–M348, V355–P375, and F376–W396.

The protein localises to the cell membrane. This is an uncharacterized protein from Rhizobium meliloti (strain 1021) (Ensifer meliloti).